We begin with the raw amino-acid sequence, 366 residues long: DNA replication and repair protein RecF (366 aa).

30–37 (GRNAQGKT) lines the ATP pocket.

It belongs to the RecF family.

Its subcellular location is the cytoplasm. In terms of biological role, the RecF protein is involved in DNA metabolism; it is required for DNA replication and normal SOS inducibility. RecF binds preferentially to single-stranded, linear DNA. It also seems to bind ATP. In Streptococcus thermophilus (strain ATCC BAA-250 / LMG 18311), this protein is DNA replication and repair protein RecF.